Reading from the N-terminus, the 517-residue chain is Beta-glucosidase 17 (517 aa).

A signal peptide spans 1-23 (MAIKSIFIIIIISIITSISELYA). Residues Q54, H158, and 203–204 (NE) each bind a beta-D-glucoside. E204 functions as the Proton donor in the catalytic mechanism. C223 and C230 are joined by a disulfide. N-linked (GlcNAc...) asparagine glycosylation is present at N229. Y346 is an a beta-D-glucoside binding site. N-linked (GlcNAc...) asparagine glycans are attached at residues N361 and N371. Residues E417, W466, 473–474 (EW), and Y482 each bind a beta-D-glucoside. E417 acts as the Nucleophile in catalysis. N-linked (GlcNAc...) asparagine glycosylation is present at N510.

It belongs to the glycosyl hydrolase 1 family.

The enzyme catalyses Hydrolysis of terminal, non-reducing beta-D-glucosyl residues with release of beta-D-glucose.. This chain is Beta-glucosidase 17, found in Arabidopsis thaliana (Mouse-ear cress).